We begin with the raw amino-acid sequence, 101 residues long: NAD(P)H-quinone oxidoreductase subunit 4L, chloroplastic (101 aa).

Helical transmembrane passes span 2–22 (MLEHVLVLSAYLFSIGIYGLI), 32–52 (MCLELILNAVNLNFVTFSDFF), and 61–81 (IFSIFVIAIAAAEAAIGPAIV).

It belongs to the complex I subunit 4L family. In terms of assembly, NDH is composed of at least 16 different subunits, 5 of which are encoded in the nucleus.

Its subcellular location is the plastid. It localises to the chloroplast thylakoid membrane. The enzyme catalyses a plastoquinone + NADH + (n+1) H(+)(in) = a plastoquinol + NAD(+) + n H(+)(out). It catalyses the reaction a plastoquinone + NADPH + (n+1) H(+)(in) = a plastoquinol + NADP(+) + n H(+)(out). Its function is as follows. NDH shuttles electrons from NAD(P)H:plastoquinone, via FMN and iron-sulfur (Fe-S) centers, to quinones in the photosynthetic chain and possibly in a chloroplast respiratory chain. The immediate electron acceptor for the enzyme in this species is believed to be plastoquinone. Couples the redox reaction to proton translocation, and thus conserves the redox energy in a proton gradient. The sequence is that of NAD(P)H-quinone oxidoreductase subunit 4L, chloroplastic from Fagopyrum esculentum subsp. ancestrale (Wild buckwheat).